The chain runs to 214 residues: Pyrophosphatase PpaX (214 aa).

The Nucleophile role is filled by D9.

The protein belongs to the HAD-like hydrolase superfamily. PpaX family. It depends on Mg(2+) as a cofactor.

The enzyme catalyses diphosphate + H2O = 2 phosphate + H(+). Hydrolyzes pyrophosphate formed during P-Ser-HPr dephosphorylation by HPrK/P. Might play a role in controlling the intracellular pyrophosphate pool. In Oceanobacillus iheyensis (strain DSM 14371 / CIP 107618 / JCM 11309 / KCTC 3954 / HTE831), this protein is Pyrophosphatase PpaX.